The sequence spans 896 residues: Alanine--tRNA ligase (896 aa).

The segment covering 439–456 has biased composition (basic and acidic residues); that stretch reads QRAKDDAKAKKGQHRDAS. Residues 439–459 form a disordered region; it reads QRAKDDAKAKKGQHRDASAYR. Positions 579, 583, 681, and 685 each coordinate Zn(2+).

The protein belongs to the class-II aminoacyl-tRNA synthetase family. Requires Zn(2+) as cofactor.

It localises to the cytoplasm. The enzyme catalyses tRNA(Ala) + L-alanine + ATP = L-alanyl-tRNA(Ala) + AMP + diphosphate. In terms of biological role, catalyzes the attachment of alanine to tRNA(Ala) in a two-step reaction: alanine is first activated by ATP to form Ala-AMP and then transferred to the acceptor end of tRNA(Ala). Also edits incorrectly charged Ser-tRNA(Ala) and Gly-tRNA(Ala) via its editing domain. This is Alanine--tRNA ligase from Nocardioides sp. (strain ATCC BAA-499 / JS614).